The chain runs to 342 residues: tRNA N6-adenosine threonylcarbamoyltransferase (342 aa).

Fe cation contacts are provided by H112 and H116. Substrate is bound by residues 134–138, D167, G180, and N278; that span reads IVSGG. Position 306 (D306) interacts with Fe cation.

The protein belongs to the KAE1 / TsaD family. The cofactor is Fe(2+).

The protein localises to the cytoplasm. The catalysed reaction is L-threonylcarbamoyladenylate + adenosine(37) in tRNA = N(6)-L-threonylcarbamoyladenosine(37) in tRNA + AMP + H(+). Functionally, required for the formation of a threonylcarbamoyl group on adenosine at position 37 (t(6)A37) in tRNAs that read codons beginning with adenine. Is involved in the transfer of the threonylcarbamoyl moiety of threonylcarbamoyl-AMP (TC-AMP) to the N6 group of A37, together with TsaE and TsaB. TsaD likely plays a direct catalytic role in this reaction. This Anaplasma phagocytophilum (strain HZ) protein is tRNA N6-adenosine threonylcarbamoyltransferase.